The chain runs to 269 residues: Ribonuclease HII (269 aa).

Positions 83-269 (YLIAGVDEVG…HRMSFLTNIL (187 aa)) constitute an RNase H type-2 domain. The a divalent metal cation site is built by aspartate 89, glutamate 90, and aspartate 185.

The protein belongs to the RNase HII family. The cofactor is Mn(2+). Mg(2+) serves as cofactor.

It is found in the cytoplasm. It carries out the reaction Endonucleolytic cleavage to 5'-phosphomonoester.. Its function is as follows. Endonuclease that specifically degrades the RNA of RNA-DNA hybrids. This chain is Ribonuclease HII, found in Clostridium botulinum (strain Hall / ATCC 3502 / NCTC 13319 / Type A).